An 802-amino-acid polypeptide reads, in one-letter code: Oligophrenin-1 (802 aa).

The region spanning 265 to 368 is the PH domain; that stretch reads QPTIEGYLYT…WMEAMDGKEP (104 aa). Positions 380–564 constitute a Rho-GAP domain; that stretch reads MELNEVGFKF…ILIEHFGKIY (185 aa). Disordered stretches follow at residues 606–665 and 681–802; these read SLDE…SEPC and GTKA…GDES. Over residues 617–627 the composition is skewed to polar residues; that stretch reads QTPNGTITSNL. Positions 716–732 are enriched in basic and acidic residues; that stretch reads HHKEGDTDGFSKVRPPG.

As to quaternary structure, interacts with HOMER1. Interacts with AMPA receptor complexes. Interacts with SH3GL2 (endophilin-A1). Interacts (via C-terminus) with NR1D1.

Its subcellular location is the postsynapse. The protein localises to the presynapse. It localises to the cell projection. The protein resides in the axon. It is found in the dendritic spine. Its subcellular location is the dendrite. The protein localises to the cytoplasm. Its function is as follows. Stimulates GTP hydrolysis of members of the Rho family. Its action on RHOA activity and signaling is implicated in growth and stabilization of dendritic spines, and therefore in synaptic function. Critical for the stabilization of AMPA receptors at postsynaptic sites. Critical for the regulation of synaptic vesicle endocytosis at presynaptic terminals. Required for the localization of NR1D1 to dendrites, can suppress its repressor activity and protect it from proteasomal degradation. This is Oligophrenin-1 (Ophn1) from Mus musculus (Mouse).